We begin with the raw amino-acid sequence, 209 residues long: Uracil phosphoribosyltransferase (209 aa).

5-phospho-alpha-D-ribose 1-diphosphate is bound by residues arginine 79, arginine 104, and 131 to 139; that span reads DPMLATGGS. Uracil is bound by residues isoleucine 194 and 199–201; that span reads GDA. 5-phospho-alpha-D-ribose 1-diphosphate is bound at residue aspartate 200.

It belongs to the UPRTase family. Mg(2+) is required as a cofactor.

The enzyme catalyses UMP + diphosphate = 5-phospho-alpha-D-ribose 1-diphosphate + uracil. Its pathway is pyrimidine metabolism; UMP biosynthesis via salvage pathway; UMP from uracil: step 1/1. Allosterically activated by GTP. Its function is as follows. Catalyzes the conversion of uracil and 5-phospho-alpha-D-ribose 1-diphosphate (PRPP) to UMP and diphosphate. The polypeptide is Uracil phosphoribosyltransferase (Listeria innocua serovar 6a (strain ATCC BAA-680 / CLIP 11262)).